A 638-amino-acid polypeptide reads, in one-letter code: Carbon monoxide dehydrogenase (638 aa).

[4Fe-4S] cluster is bound by residues Cys-46, Cys-55, Cys-58, Cys-63, and Cys-74. 6 residues coordinate [Ni-4Fe-5S] cluster: His-265, Cys-299, Cys-343, Cys-452, Cys-483, and Cys-524.

Belongs to the Ni-containing carbon monoxide dehydrogenase family. Homodimer. It depends on [4Fe-4S] cluster as a cofactor. [Ni-4Fe-5S] cluster serves as cofactor.

It catalyses the reaction CO + 2 oxidized [2Fe-2S]-[ferredoxin] + H2O = 2 reduced [2Fe-2S]-[ferredoxin] + CO2 + 2 H(+). CODH oxidizes carbon monoxide coupled, via CooF, to the reduction of a hydrogen cation by a hydrogenase (possibly CooH). The polypeptide is Carbon monoxide dehydrogenase (cooS) (Methanopyrus kandleri (strain AV19 / DSM 6324 / JCM 9639 / NBRC 100938)).